We begin with the raw amino-acid sequence, 262 residues long: ABSCISIC ACID-INSENSITIVE 5-like protein 3 (262 aa).

Ser-21, Ser-43, and Ser-66 each carry phosphoserine. Thr-104 is modified (phosphothreonine). The region spanning 190–253 (VERRQKRMIK…SEPPPDPKWK (64 aa)) is the bZIP domain. The segment at 192 to 211 (RRQKRMIKNRESAARSRARK) is basic motif. The segment at 218 to 232 (LEIKVSRLEEENEKL) is leucine-zipper. The segment covering 239 to 252 (EKILPSEPPPDPKW) has biased composition (basic and acidic residues). The tract at residues 239 to 262 (EKILPSEPPPDPKWKLRRTNSASL) is disordered.

The protein belongs to the bZIP family. ABI5 subfamily. As to quaternary structure, DNA-binding heterodimer with ABI5/DPBF1, DPBF2 or AREB3/DPBF3. Interacts with the AFP proteins AFP2, AFP3 and AFP4. As to expression, predominantly expressed in seeds.

The protein localises to the nucleus. Binds to the embryo specification element and the ABA-responsive element (ABRE) of the Dc3 gene promoter and to the ABRE of the Em1 gene promoter. Could participate in abscisic acid-regulated gene expression during seed development. The protein is ABSCISIC ACID-INSENSITIVE 5-like protein 3 (DPBF4) of Arabidopsis thaliana (Mouse-ear cress).